The following is a 354-amino-acid chain: Uroporphyrinogen decarboxylase (354 aa).

Residues arginine 25–arginine 29, aspartate 75, tyrosine 152, threonine 207, and histidine 330 each bind substrate.

It belongs to the uroporphyrinogen decarboxylase family. In terms of assembly, homodimer.

The protein resides in the cytoplasm. It catalyses the reaction uroporphyrinogen III + 4 H(+) = coproporphyrinogen III + 4 CO2. The protein operates within porphyrin-containing compound metabolism; protoporphyrin-IX biosynthesis; coproporphyrinogen-III from 5-aminolevulinate: step 4/4. Functionally, catalyzes the decarboxylation of four acetate groups of uroporphyrinogen-III to yield coproporphyrinogen-III. The protein is Uroporphyrinogen decarboxylase of Xanthomonas euvesicatoria pv. vesicatoria (strain 85-10) (Xanthomonas campestris pv. vesicatoria).